A 194-amino-acid polypeptide reads, in one-letter code: Methylated-DNA--protein-cysteine methyltransferase (194 aa).

The DNA site is built by tyrosine 125 and arginine 139. The active-site Nucleophile; methyl group acceptor is the cysteine 156. Serine 162 contacts DNA.

It belongs to the MGMT family.

Its subcellular location is the nucleus. It carries out the reaction a 6-O-methyl-2'-deoxyguanosine in DNA + L-cysteinyl-[protein] = S-methyl-L-cysteinyl-[protein] + a 2'-deoxyguanosine in DNA. The enzyme catalyses a 4-O-methyl-thymidine in DNA + L-cysteinyl-[protein] = a thymidine in DNA + S-methyl-L-cysteinyl-[protein]. Involved in the cellular defense against the biological effects of O6-methylguanine (O6-MeG) and O4-methylthymine (O4-MeT) in DNA. Repairs the methylated nucleobase in DNA by stoichiometrically transferring the methyl group to a cysteine residue in the enzyme. This is a suicide reaction: the enzyme is irreversibly inactivated. The chain is Methylated-DNA--protein-cysteine methyltransferase (MGT1) from Scheffersomyces stipitis (strain ATCC 58785 / CBS 6054 / NBRC 10063 / NRRL Y-11545) (Yeast).